The chain runs to 402 residues: Zinc finger CCHC domain-containing protein 12 (402 aa).

The interval 308–341 (IDSPHNSRAQFPSTSGGSGYKNNGPGEMRRARKR) is disordered. Residues 311 to 322 (PHNSRAQFPSTS) are compositionally biased toward polar residues. The CCHC-type zinc-finger motif lies at 345 to 362 (IRCSYCGEEGHSKETCDN).

Belongs to the ZCCHC12 family. Interacts with SMAD1 and CREB-binding protein (CBP). Forms a protein-DNA complex through its association with SMAD1.

In terms of biological role, transcriptional coactivator in the bone morphogenetic protein (BMP)-signaling pathway. It positively modulates BMP signaling by interacting with SMAD1 and associating with CBP in the transcription complex. It contributes to the BMP-induced enhancement of cholinergic-neuron-specific gene expression. The chain is Zinc finger CCHC domain-containing protein 12 (ZCCHC12) from Homo sapiens (Human).